The chain runs to 406 residues: Probable 4-hydroxyphenylpyruvate dioxygenase 2 (406 aa).

VOC domains follow at residues Gly22–Arg174 and Glu205–Lys363. 3 residues coordinate Fe cation: His208, His291, and Glu374.

This sequence belongs to the 4HPPD family. It depends on Fe cation as a cofactor.

It catalyses the reaction 3-(4-hydroxyphenyl)pyruvate + O2 = homogentisate + CO2. It functions in the pathway amino-acid degradation; L-phenylalanine degradation; acetoacetate and fumarate from L-phenylalanine: step 3/6. This is Probable 4-hydroxyphenylpyruvate dioxygenase 2 from Aspergillus fumigatus (strain ATCC MYA-4609 / CBS 101355 / FGSC A1100 / Af293) (Neosartorya fumigata).